A 210-amino-acid polypeptide reads, in one-letter code: LexA repressor (210 aa).

The segment at residues 29-49 (VREIGEAVDLSSTSTVHGHIS) is a DNA-binding region (H-T-H motif). Catalysis depends on for autocatalytic cleavage activity residues Ser130 and Lys168.

This sequence belongs to the peptidase S24 family. Homodimer.

It catalyses the reaction Hydrolysis of Ala-|-Gly bond in repressor LexA.. Its function is as follows. Represses a number of genes involved in the response to DNA damage (SOS response), including recA and lexA. In the presence of single-stranded DNA, RecA interacts with LexA causing an autocatalytic cleavage which disrupts the DNA-binding part of LexA, leading to derepression of the SOS regulon and eventually DNA repair. The protein is LexA repressor of Lactiplantibacillus plantarum (strain ATCC BAA-793 / NCIMB 8826 / WCFS1) (Lactobacillus plantarum).